Consider the following 465-residue polypeptide: MESLRIYNTLARDKQVFVPRQPGEVRMYVCGITVYDYCHVGHARMLVVFDLVQRWLRAIGYRVTYVRNITDIDDKIIRRAVENGETIKSLTDRFIGAMHEDETALGIQRPDVEPRATQFIPQMLGMIETLETNGYAYQAADGDVNYSVRKFADYGKLSGKSLDDLRAGERVAANDAKQDPLDFVLWKRAKEDEPEGASWASKYGMGRPGWHIECSAMGCSLLGNHFDIHGGGQDLQFPHHENEIAQSEGATGETFVNYWMHNGFVQVDNEKMSKSLGNFFTIREVLERYDAEVVRFFIVRTHYRSPLNYSDVHLDDARASLTRLYTALKDVEPDTLALDWNEPHGQRFAAAMNDDFNTPVAVATLFELAGEVNRTRDASLARQLKQLAGLLGLLGREPRAFLQQASGAAQAGGLAADEIEAQIAARVAAKQAKDYAEADRIRAELLEAGIALEDKPGGSTEWRRV.

Zn(2+) is bound at residue Cys30. The 'HIGH' region motif lies at 32–42 (ITVYDYCHVGH). Zn(2+) contacts are provided by Cys214, His239, and Glu243. Residues 271-275 (KMSKS) carry the 'KMSKS' region motif. Residue Lys274 coordinates ATP.

Belongs to the class-I aminoacyl-tRNA synthetase family. Monomer. The cofactor is Zn(2+).

It localises to the cytoplasm. It carries out the reaction tRNA(Cys) + L-cysteine + ATP = L-cysteinyl-tRNA(Cys) + AMP + diphosphate. The polypeptide is Cysteine--tRNA ligase (Burkholderia orbicola (strain MC0-3)).